A 205-amino-acid polypeptide reads, in one-letter code: High frequency lysogenization protein HflD homolog (205 aa).

It belongs to the HflD family.

The protein resides in the cytoplasm. Its subcellular location is the cell inner membrane. The polypeptide is High frequency lysogenization protein HflD homolog (Alkalilimnicola ehrlichii (strain ATCC BAA-1101 / DSM 17681 / MLHE-1)).